The chain runs to 274 residues: Eukaryotic translation initiation factor 3 subunit G-2 (274 aa).

The region spanning 194 to 272 is the RRM domain; sequence SAVRISNLSE…LILCVEWSKP (79 aa).

Belongs to the eIF-3 subunit G family. Component of the eukaryotic translation initiation factor 3 (eIF-3) complex. The eIF-3 complex interacts with pix.

The protein resides in the cytoplasm. Functionally, RNA-binding component of the eukaryotic translation initiation factor 3 (eIF-3) complex, which is involved in protein synthesis of a specialized repertoire of mRNAs and, together with other initiation factors, stimulates binding of mRNA and methionyl-tRNAi to the 40S ribosome. The eIF-3 complex specifically targets and initiates translation of a subset of mRNAs involved in cell proliferation. This subunit can bind 18S rRNA. The protein is Eukaryotic translation initiation factor 3 subunit G-2 of Drosophila pseudoobscura pseudoobscura (Fruit fly).